The sequence spans 495 residues: ATP synthase subunit beta, chloroplastic (495 aa).

172–179 contacts ATP; that stretch reads GGAGVGKT.

The protein belongs to the ATPase alpha/beta chains family. F-type ATPases have 2 components, CF(1) - the catalytic core - and CF(0) - the membrane proton channel. CF(1) has five subunits: alpha(3), beta(3), gamma(1), delta(1), epsilon(1). CF(0) has four main subunits: a(1), b(1), b'(1) and c(9-12).

It localises to the plastid. The protein localises to the chloroplast thylakoid membrane. The enzyme catalyses ATP + H2O + 4 H(+)(in) = ADP + phosphate + 5 H(+)(out). Its function is as follows. Produces ATP from ADP in the presence of a proton gradient across the membrane. The catalytic sites are hosted primarily by the beta subunits. This chain is ATP synthase subunit beta, chloroplastic, found in Pseudogaltonia clavata (Cape hyacinth).